The primary structure comprises 196 residues: Glycerol-3-phosphate acyltransferase (196 aa).

The next 5 membrane-spanning stretches (helical) occupy residues 1 to 21, 53 to 73, 76 to 96, 115 to 135, and 141 to 161; these read MGFI…SILF, KYGA…AILD, YIDP…IGHI, VVFG…AFVF, and VSLA…EGDF.

This sequence belongs to the PlsY family. Probably interacts with PlsX.

It is found in the cell inner membrane. The catalysed reaction is an acyl phosphate + sn-glycerol 3-phosphate = a 1-acyl-sn-glycero-3-phosphate + phosphate. Its pathway is lipid metabolism; phospholipid metabolism. Catalyzes the transfer of an acyl group from acyl-phosphate (acyl-PO(4)) to glycerol-3-phosphate (G3P) to form lysophosphatidic acid (LPA). This enzyme utilizes acyl-phosphate as fatty acyl donor, but not acyl-CoA or acyl-ACP. The chain is Glycerol-3-phosphate acyltransferase from Hydrogenobaculum sp. (strain Y04AAS1).